The primary structure comprises 187 residues: Transmembrane protein 212 (187 aa).

5 helical membrane-spanning segments follow: residues 11–31, 42–62, 76–96, 106–126, and 148–168; these read TLVTLGGLSIFSGAIAFFPVF, VWIACPIWNGALAVTAGSLVL, AVFTFVILSILGCPLHFTVAL, FYSFSGVAGTNYLGYVVTFPF, and LQVLDLCLSLILFCVSLAVFI.

It localises to the membrane. The chain is Transmembrane protein 212 (Tmem212) from Mus musculus (Mouse).